A 171-amino-acid chain; its full sequence is uncharacterized protein (171 aa).

The first 18 residues, 1–18 (MRYSKLTMLIPCALLLSA), serve as a signal peptide directing secretion. Residue cysteine 19 is the site of N-palmitoyl cysteine attachment. The S-diacylglycerol cysteine moiety is linked to residue cysteine 19.

It localises to the cell membrane. This is an uncharacterized protein from Escherichia coli (strain K12).